The chain runs to 399 residues: Syndecan (399 aa).

An N-terminal signal peptide occupies residues methionine 1–alanine 28. A disordered region spans residues alanine 28–glycine 319. Residues glutamine 29–isoleucine 340 are Extracellular-facing. Over residues proline 36–serine 46 the composition is skewed to low complexity. Serine 62 is a glycosylation site (O-linked (Xyl...) (glycosaminoglycan) serine). The segment covering glycine 67–aspartate 77 has biased composition (basic and acidic residues). O-linked (Xyl...) (glycosaminoglycan) serine glycosylation is found at serine 79, serine 81, and serine 110. Residues serine 99–histidine 116 show a composition bias toward polar residues. The span at threonine 117–threonine 172 shows a compositional bias: low complexity. Asparagine 160 carries N-linked (GlcNAc...) asparagine glycosylation. Acidic residues predominate over residues threonine 191 to aspartate 214. An O-linked (Xyl...) (glycosaminoglycan) serine glycan is attached at serine 194. A compositionally biased stretch (basic and acidic residues) spans tyrosine 215–aspartate 226. A compositionally biased stretch (acidic residues) spans aspartate 253 to isoleucine 270. Residues proline 299–aspartate 309 are compositionally biased toward polar residues. Residues leucine 341 to arginine 365 form a helical membrane-spanning segment. Residues methionine 366–alanine 399 are Cytoplasmic-facing. Residues serine 373–alanine 399 are disordered. Positions proline 383–alanine 399 are enriched in polar residues.

Belongs to the syndecan proteoglycan family. In terms of tissue distribution, in 13-16 hours embryos, expressed in lymph glands, peripheral and central nervous system and basal surfaces of gut epithelia. Sdc and robo are coexpressed in domains adjacent to slit; in tracheal pits and midline glia cells.

It is found in the membrane. Functionally, cell surface proteoglycan that bears heparan sulfate. Required for axonal and myotube guidance, is a necessary component of slit/robo signaling and is required in the slit target cells. The polypeptide is Syndecan (Sdc) (Drosophila melanogaster (Fruit fly)).